The chain runs to 711 residues: Hydroperoxide isomerase ALOXE3 (711 aa).

One can recognise a PLAT domain in the interval 2-119 (AVYRLCVTTG…TVELRPGTAR (118 aa)). Positions 120-711 (TICQDSLPLL…PPLIENSVSI (592 aa)) constitute a Lipoxygenase domain. 5 residues coordinate Fe cation: histidine 408, histidine 413, histidine 588, asparagine 592, and isoleucine 711.

This sequence belongs to the lipoxygenase family. It depends on Fe cation as a cofactor. As to expression, predominantly expressed in skin.

The protein resides in the cytoplasm. The catalysed reaction is a hydroperoxyeicosatetraenoate = a hydroxy-epoxy-eicosatetraenoate. The enzyme catalyses (12R)-hydroperoxy-(5Z,8Z,10E,14Z)-eicosatetraenoate = (8R)-hydroxy-(11R,12R)-epoxy-(5Z,9E,14Z)-eicosatrienoate. It catalyses the reaction (12S)-hydroperoxy-(5Z,8Z,10E,14Z)-eicosatetraenoate = (8R)-hydroxy-(11S,12S)-epoxy-(5Z,9E,14Z)-eicosatrienoate. It carries out the reaction (12S)-hydroperoxy-(5Z,8Z,10E,14Z)-eicosatetraenoate = (10R)-hydroxy-(11S,12S)-epoxy-(5Z,8Z,14Z)-eicosatrienoate. The catalysed reaction is (15S)-hydroperoxy-(5Z,8Z,11Z,13E)-eicosatetraenoate = (13R)-hydroxy-(14S,15S)-epoxy-(5Z,8Z,11Z)-eicosatrienoate. The enzyme catalyses (5S)-hydroperoxy-(6E,8Z,11Z,14Z)-eicosatetraenoate = 7R-hydroxy-5S,6S-epoxy-(8Z,11Z,14Z)-eicosatrienoate. It catalyses the reaction (13S)-hydroperoxy-(9Z,11E)-octadecadienoate = 11-hydroxy-(12S,13S)-epoxy-(9Z)-octadecenoate. It carries out the reaction N-[omega-(9R)-hydroperoxy-(10E,12Z)-octadecadienoyloxy]acyl-beta-D-glucosyl-(1&lt;-&gt;1)-octadecasphing-4E-enine = a N-[omega-(9R,10R)-epoxy-(13R)-hydroxy-(11E)-octadecenoyloxy]acyl-beta-D-glucosyl-(1&lt;-&gt;1)-sphing-4E-enine. The catalysed reaction is a N-[omega-(9R)-hydroperoxy-(10E,12Z)-octadecadienoyloxy]-acylsphin-4E-enine = a N-[omega-(9R,10R)-epoxy-(13R)-hydroxy-(11E)-octadecenoyloxy]-acylsphing-4E-enine. The enzyme catalyses a hydroperoxyeicosatetraenoate = an oxoeicosatetraenoate + H2O. It catalyses the reaction (12R)-hydroperoxy-(5Z,8Z,10E,14Z)-eicosatetraenoate = 12-oxo-(5Z,8Z,10E,14Z)-eicosatetraenoate + H2O. It carries out the reaction (12S)-hydroperoxy-(5Z,8Z,10E,14Z)-eicosatetraenoate = 12-oxo-(5Z,8Z,10E,14Z)-eicosatetraenoate + H2O. The catalysed reaction is (15S)-hydroperoxy-(5Z,8Z,11Z,13E)-eicosatetraenoate = 15-oxo-(5Z,8Z,11Z,13E)-eicosatetraenoate + H2O. The enzyme catalyses (13S)-hydroperoxy-(9Z,11E)-octadecadienoate = 13-oxo-(9Z,11E)-octadecadienoate + H2O. It catalyses the reaction (8S)-hydroperoxy-(5Z,9E,11Z,14Z)-eicosatetraenoate = (10R)-hydroxy-(8S,9S)-epoxy-(5Z,11Z,14Z)-eicosatrienoate. It carries out the reaction (8R)-hydroperoxy-(5Z,9E,11Z,14Z)-eicosatetraenoate = 8-oxo-(5Z,9E,11Z,14Z)-eicosatetraenoate + H2O. The catalysed reaction is (8S)-hydroperoxy-(5Z,9E,11Z,14Z)-eicosatetraenoate = 8-oxo-(5Z,9E,11Z,14Z)-eicosatetraenoate + H2O. It participates in lipid metabolism; hydroperoxy eicosatetraenoic acid biosynthesis. It functions in the pathway lipid metabolism; sphingolipid metabolism. Its activity is regulated as follows. Lipoxygenase activity is activated by 13(S)-HPODE leading to an active free ferric enzyme. The lipoxygenase and hydroperoxide isomerase activities are in competition and are reciprocally regulated by oxygen. The oxygen reacts with an epoxyallylic radical intermediate leading to an epoxyallylic peroxyl radical, which, due to its limited reactivity within the enzyme active site, it dissociates and leaves the enzyme in the activated free ferric state. Its function is as follows. Non-heme iron-containing lipoxygenase which is atypical in that it displays a prominent hydroperoxide isomerase activity and a reduced lipoxygenases activity. The hydroperoxide isomerase activity catalyzes the isomerization of hydroperoxides, derived from arachidonic and linoleic acid by ALOX12B, into hepoxilin-type epoxyalcohols and ketones. In presence of oxygen, oxygenates polyunsaturated fatty acids, including arachidonic acid, to produce fatty acid hydroperoxides. In the skin, acts downstream of ALOX12B on the linoleate moiety of esterified omega-hydroxyacyl-sphingosine (EOS) ceramides to produce an epoxy-ketone derivative, a crucial step in the conjugation of omega-hydroxyceramide to membrane proteins. Therefore plays a crucial role in the synthesis of corneocytes lipid envelope and the establishment of the skin barrier to water loss. In parallel, it may have a signaling function in barrier formation through the production of hepoxilins metabolites. Also plays a role in adipocyte differentiation through hepoxilin A3 and hepoxilin B3 production which in turn activate PPARG. Through the production of hepoxilins in the spinal cord, it may regulate inflammatory tactile allodynia. In Homo sapiens (Human), this protein is Hydroperoxide isomerase ALOXE3.